The sequence spans 427 residues: Glutamate-1-semialdehyde 2,1-aminomutase (427 aa).

Lys-265 bears the N6-(pyridoxal phosphate)lysine mark.

Belongs to the class-III pyridoxal-phosphate-dependent aminotransferase family. HemL subfamily. As to quaternary structure, homodimer. Requires pyridoxal 5'-phosphate as cofactor.

Its subcellular location is the cytoplasm. The catalysed reaction is (S)-4-amino-5-oxopentanoate = 5-aminolevulinate. It participates in porphyrin-containing compound metabolism; protoporphyrin-IX biosynthesis; 5-aminolevulinate from L-glutamyl-tRNA(Glu): step 2/2. The polypeptide is Glutamate-1-semialdehyde 2,1-aminomutase (Neisseria meningitidis serogroup B (strain ATCC BAA-335 / MC58)).